Reading from the N-terminus, the 202-residue chain is Lipoprotein signal peptidase (202 aa).

Residues 1 to 29 (MPDEPTGSADPLTSTEEAGGAGEPNAPAP) form a disordered region. The next 3 helical transmembrane spans lie at 35-55 (MLLSVAVVVLTLDIVTKVVAV), 88-108 (GYTWVLTLIATGVVVGIFWMG), and 112-132 (VSPWWALGLGMILGGAMGNLV). Catalysis depends on residues D148 and D162. Residues 160–180 (VADPSVVGGAILLVILSIFGF) form a helical membrane-spanning segment.

Belongs to the peptidase A8 family.

It is found in the cell membrane. It carries out the reaction Release of signal peptides from bacterial membrane prolipoproteins. Hydrolyzes -Xaa-Yaa-Zaa-|-(S,diacylglyceryl)Cys-, in which Xaa is hydrophobic (preferably Leu), and Yaa (Ala or Ser) and Zaa (Gly or Ala) have small, neutral side chains.. It participates in protein modification; lipoprotein biosynthesis (signal peptide cleavage). Its function is as follows. This protein specifically catalyzes the removal of signal peptides from prolipoproteins. This is Lipoprotein signal peptidase from Mycobacterium bovis (strain ATCC BAA-935 / AF2122/97).